The following is a 460-amino-acid chain: Glycine--tRNA ligase (460 aa).

Residues Arg-98 and Glu-172 each coordinate substrate. Residues 204–206, 214–219, 288–289, and 332–335 each bind ATP; these read RNE, FRTREF, EL, and GADR. 219–223 lines the substrate pocket; the sequence is FEQME. 328–332 is a substrate binding site; it reads EPSLG.

Belongs to the class-II aminoacyl-tRNA synthetase family. In terms of assembly, homodimer.

The protein resides in the cytoplasm. It carries out the reaction tRNA(Gly) + glycine + ATP = glycyl-tRNA(Gly) + AMP + diphosphate. Its function is as follows. Catalyzes the attachment of glycine to tRNA(Gly). The polypeptide is Glycine--tRNA ligase (Geobacillus kaustophilus (strain HTA426)).